Here is a 638-residue protein sequence, read N- to C-terminus: Sodium- and chloride-dependent glycine transporter 1 (638 aa).

Residues 1–30 are disordered; it reads MAVAHGPVATSSPEQNGAVPSEATKKDQNL. The Cytoplasmic segment spans residues 1-40; it reads MAVAHGPVATSSPEQNGAVPSEATKKDQNLTRGNWGNQIE. Transmembrane regions (helical) follow at residues 41–61, 68–88, and 120–140; these read FVLTSVGYAVGLGNVWRFPYL, GAFMFPYFIMLVFCGIPLFFM, and VSTYIGIYYNVVICIAFYYFF. Over 141–217 the chain is Extracellular; sequence SSMTHVLPWA…LSDDIGDFGE (77 aa). 4 N-linked (GlcNAc...) asparagine glycosylation sites follow: Asn169, Asn172, Asn182, and Asn188. 9 consecutive transmembrane segments (helical) span residues 218–238, 247–267, 292–312, 339–359, 382–402, 438–458, 462–482, 502–522, and 542–562; these read VRLPLLGCLGVSWVVVFLCLI, VVYFTATFPYVVLTILFVRGV, VWGDAASQIFYSLGCAWGGLI, SVYAGFVIFSILGFMANHLGV, LLPISPLWSLLFFFMLILLGL, VAGFLLGIPLTSQAGIYWLLL, YAASFSLVVISCIMCVSIMYI, LFFQICWRFVSPTIIFFILIF, and VAIGFLMALSSVICIPLYALF. Over 563 to 638 the chain is Cytoplasmic; it reads QLCRTDGDTL…GSSRLQDSRI (76 aa). Residue Thr603 is modified to Phosphothreonine. Residues Ser605 and Ser630 each carry the phosphoserine modification. The segment at 627–638 is essential for interaction with EXOC1; it reads SNGSSRLQDSRI.

This sequence belongs to the sodium:neurotransmitter symporter (SNF) (TC 2.A.22) family. SLC6A9 subfamily. In terms of assembly, interacts with EXOC1; interaction increases the transporter capacity of SLC6A9 probably by promoting its insertion into the cell membrane. Interacts with EXOC3 and EXOC4. In terms of tissue distribution, found only in the white matter of the CNS. Found in the gray matter of CNS as well as in macrophages and mast cells in peripheral tissues.

It localises to the cell membrane. It carries out the reaction glycine(out) + chloride(out) + 2 Na(+)(out) = glycine(in) + chloride(in) + 2 Na(+)(in). Its activity is regulated as follows. Inhibited by sarcosine. Its function is as follows. Sodium- and chloride-dependent glycine transporter. Essential for regulating glycine concentrations at inhibitory glycinergic synapses. This Rattus norvegicus (Rat) protein is Sodium- and chloride-dependent glycine transporter 1 (Slc6a9).